A 550-amino-acid chain; its full sequence is Eukaryotic translation initiation factor 3 subunit D-2 (550 aa).

The tract at residues 97 to 126 (RGRGFRPSVHNNPRNVRNQRGRKGNAMGNI) is disordered. The interval 287-301 (KFDMLTVNETSQEPP) is RNA gate. Residues 530 to 550 (SDVSEEEESSEDKPFGLSMNN) are disordered.

The protein belongs to the eIF-3 subunit D family. As to quaternary structure, component of the eukaryotic translation initiation factor 3 (eIF-3) complex. The eIF-3 complex interacts with pix.

It localises to the cytoplasm. Functionally, mRNA cap-binding component of the eukaryotic translation initiation factor 3 (eIF-3) complex, which is involved in protein synthesis of a specialized repertoire of mRNAs and, together with other initiation factors, stimulates binding of mRNA and methionyl-tRNAi to the 40S ribosome. The eIF-3 complex specifically targets and initiates translation of a subset of mRNAs involved in cell proliferation. In the eIF-3 complex, eif3d specifically recognizes and binds the 7-methylguanosine cap of a subset of mRNAs. This Drosophila willistoni (Fruit fly) protein is Eukaryotic translation initiation factor 3 subunit D-2.